The chain runs to 496 residues: UDP-N-acetylmuramoyl-L-alanyl-D-glutamate--2,6-diaminopimelate ligase (496 aa).

Positions 29 and 31 each coordinate UDP-N-acetyl-alpha-D-muramoyl-L-alanyl-D-glutamate. 118–124 (GTNGKTT) is an ATP binding site. Residues Asn159, 160–161 (TT), Ser187, Gln193, and Arg195 contribute to the UDP-N-acetyl-alpha-D-muramoyl-L-alanyl-D-glutamate site. Lys227 carries the post-translational modification N6-carboxylysine. Residues Arg392, 416–419 (DNPR), Gly467, and Glu471 contribute to the meso-2,6-diaminopimelate site. The short motif at 416-419 (DNPR) is the Meso-diaminopimelate recognition motif element.

It belongs to the MurCDEF family. MurE subfamily. Mg(2+) is required as a cofactor. Post-translationally, carboxylation is probably crucial for Mg(2+) binding and, consequently, for the gamma-phosphate positioning of ATP.

Its subcellular location is the cytoplasm. It catalyses the reaction UDP-N-acetyl-alpha-D-muramoyl-L-alanyl-D-glutamate + meso-2,6-diaminopimelate + ATP = UDP-N-acetyl-alpha-D-muramoyl-L-alanyl-gamma-D-glutamyl-meso-2,6-diaminopimelate + ADP + phosphate + H(+). It functions in the pathway cell wall biogenesis; peptidoglycan biosynthesis. In terms of biological role, catalyzes the addition of meso-diaminopimelic acid to the nucleotide precursor UDP-N-acetylmuramoyl-L-alanyl-D-glutamate (UMAG) in the biosynthesis of bacterial cell-wall peptidoglycan. The chain is UDP-N-acetylmuramoyl-L-alanyl-D-glutamate--2,6-diaminopimelate ligase from Wigglesworthia glossinidia brevipalpis.